We begin with the raw amino-acid sequence, 326 residues long: Biotin synthase (326 aa).

The 225-residue stretch at 51 to 275 (NAVQRSTLLS…MMPTSFVRLS (225 aa)) folds into the Radical SAM core domain. Residues C66, C70, and C73 each coordinate [4Fe-4S] cluster. [2Fe-2S] cluster-binding residues include C110, C141, C201, and R273.

Belongs to the radical SAM superfamily. Biotin synthase family. Homodimer. [4Fe-4S] cluster serves as cofactor. It depends on [2Fe-2S] cluster as a cofactor.

The enzyme catalyses (4R,5S)-dethiobiotin + (sulfur carrier)-SH + 2 reduced [2Fe-2S]-[ferredoxin] + 2 S-adenosyl-L-methionine = (sulfur carrier)-H + biotin + 2 5'-deoxyadenosine + 2 L-methionine + 2 oxidized [2Fe-2S]-[ferredoxin]. It functions in the pathway cofactor biosynthesis; biotin biosynthesis; biotin from 7,8-diaminononanoate: step 2/2. Its function is as follows. Catalyzes the conversion of dethiobiotin (DTB) to biotin by the insertion of a sulfur atom into dethiobiotin via a radical-based mechanism. The polypeptide is Biotin synthase (Aromatoleum aromaticum (strain DSM 19018 / LMG 30748 / EbN1) (Azoarcus sp. (strain EbN1))).